The sequence spans 283 residues: Acetyl-coenzyme A carboxylase carboxyl transferase subunit beta (283 aa).

The 255-residue stretch at 29–283 (LWISCPKCQQ…VKIHSMKGAF (255 aa)) folds into the CoA carboxyltransferase N-terminal domain. Positions 33, 36, 51, and 54 each coordinate Zn(2+). The C4-type zinc-finger motif lies at 33–54 (CPKCQQSIYHKDLGKYKTCPNC).

It belongs to the AccD/PCCB family. Acetyl-CoA carboxylase is a heterohexamer composed of biotin carboxyl carrier protein (AccB), biotin carboxylase (AccC) and two subunits each of ACCase subunit alpha (AccA) and ACCase subunit beta (AccD). The cofactor is Zn(2+).

The protein resides in the cytoplasm. It catalyses the reaction N(6)-carboxybiotinyl-L-lysyl-[protein] + acetyl-CoA = N(6)-biotinyl-L-lysyl-[protein] + malonyl-CoA. Its pathway is lipid metabolism; malonyl-CoA biosynthesis; malonyl-CoA from acetyl-CoA: step 1/1. Its function is as follows. Component of the acetyl coenzyme A carboxylase (ACC) complex. Biotin carboxylase (BC) catalyzes the carboxylation of biotin on its carrier protein (BCCP) and then the CO(2) group is transferred by the transcarboxylase to acetyl-CoA to form malonyl-CoA. The sequence is that of Acetyl-coenzyme A carboxylase carboxyl transferase subunit beta from Ligilactobacillus salivarius (strain UCC118) (Lactobacillus salivarius).